We begin with the raw amino-acid sequence, 131 residues long: Small ribosomal subunit protein uS8 (131 aa).

This sequence belongs to the universal ribosomal protein uS8 family. In terms of assembly, part of the 30S ribosomal subunit. Contacts proteins S5 and S12.

In terms of biological role, one of the primary rRNA binding proteins, it binds directly to 16S rRNA central domain where it helps coordinate assembly of the platform of the 30S subunit. The chain is Small ribosomal subunit protein uS8 from Delftia acidovorans (strain DSM 14801 / SPH-1).